A 350-amino-acid chain; its full sequence is Phenylalanine--tRNA ligase alpha subunit (350 aa).

Glutamate 257 is a Mg(2+) binding site.

Belongs to the class-II aminoacyl-tRNA synthetase family. Phe-tRNA synthetase alpha subunit type 1 subfamily. As to quaternary structure, tetramer of two alpha and two beta subunits. Requires Mg(2+) as cofactor.

The protein resides in the cytoplasm. It catalyses the reaction tRNA(Phe) + L-phenylalanine + ATP = L-phenylalanyl-tRNA(Phe) + AMP + diphosphate + H(+). The chain is Phenylalanine--tRNA ligase alpha subunit from Listeria monocytogenes serovar 1/2a (strain ATCC BAA-679 / EGD-e).